Here is a 409-residue protein sequence, read N- to C-terminus: Single Ig IL-1-related receptor (409 aa).

Over 1–117 (MAGVCDMAPN…TLWRAGPAGH (117 aa)) the chain is Extracellular. Residues 9–108 (PNFLSPSEDQ…VWNVSSHSFT (100 aa)) form the Ig-like C2-type domain. 5 N-linked (GlcNAc...) asparagine glycosylation sites follow: Asn31, Asn58, Asn73, Asn85, and Asn101. Cys32 and Cys97 are oxidised to a cystine. A helical; Signal-anchor for type III membrane protein membrane pass occupies residues 118–138 (VAAVLASLLVLVVLLLVALLY). The Cytoplasmic segment spans residues 139–409 (VKCRLNMLLW…FYCLVSEDDV (271 aa)). The TIR domain occupies 162-306 (KLYDAYVSYS…DFWKELQLAL (145 aa)). Ser382 carries the phosphoserine modification.

Belongs to the interleukin-1 receptor family. As to quaternary structure, interacts with IL1R1, IRAK1, TLR4, TLR5, TLR9 and TRAF6. Upon IL-1 stimulation found in a complex at least composed of IL1R1, SIGIRR, MYD88, IRAK1 and TRAF6. Upon stimulation with LPC found in a complex at least composed of TLR4, SIG1IR, MYD88, IRAK1 and TRAF6. Interacts with PALM3. As to expression, expressed at high levels in kidney, and at moderate levels in colon, small intestine, lung, spleen and liver. Not expressed in brain and muscle. Expressed at high levels in epithelial cells, at moderate levels in splenocytes, and at low or undetectable levels in fibroblasts or endothelial cells. Expressed in mucosal and dendritic cells.

The protein localises to the membrane. In terms of biological role, acts as a negative regulator of the Toll-like and IL-1R receptor signaling pathways. Attenuates the recruitment of receptor-proximal signaling components to the TLR4 receptor, probably through an TIR-TIR domain interaction with TLR4. Through its extracellular domain interferes with the heterodimerization of Il1R1 and IL1RAP. The chain is Single Ig IL-1-related receptor (Sigirr) from Mus musculus (Mouse).